We begin with the raw amino-acid sequence, 337 residues long: Metacaspase III c (337 aa).

Propeptides lie at residues 1-6 and 116-125; these read MGFLRR and VPPAATGTRR. Cysteine sulfenic acid (-SOH) is present on Cys202. A disulfide bridge links Cys202 with Cys259. The active site involves His207. The Ca(2+) site is built by Asp224, Asp240, and Asp241. Cys264 is an active-site residue. Asp271 lines the Ca(2+) pocket. Positions 290–337 are excised as a propeptide; it reads NFDFKKLLGKFGIDDFDKFGGEALGKINGDALGKVGKDALGKLNKFFG.

The protein belongs to the peptidase C14B family. In terms of processing, auto-proteolytic cleavage into a large and a small subunit which probably remain associated by non-covalent bonds. Following oxidative stress, the oxidation of Cys-202 leads to the formation of a disulfide bond between Cys-202 and Cys-259 which enhances catalytic activity.

Activated by Ca(2+). In terms of biological role, cysteine protease that cleaves specifically after arginine residues. This chain is Metacaspase III c, found in Phaeodactylum tricornutum (strain CCAP 1055/1).